We begin with the raw amino-acid sequence, 361 residues long: Histidinol-phosphate aminotransferase (361 aa).

Lysine 219 carries the post-translational modification N6-(pyridoxal phosphate)lysine.

This sequence belongs to the class-II pyridoxal-phosphate-dependent aminotransferase family. Histidinol-phosphate aminotransferase subfamily. In terms of assembly, homodimer. Pyridoxal 5'-phosphate serves as cofactor.

It catalyses the reaction L-histidinol phosphate + 2-oxoglutarate = 3-(imidazol-4-yl)-2-oxopropyl phosphate + L-glutamate. The protein operates within amino-acid biosynthesis; L-histidine biosynthesis; L-histidine from 5-phospho-alpha-D-ribose 1-diphosphate: step 7/9. The protein is Histidinol-phosphate aminotransferase of Acinetobacter baumannii (strain ACICU).